We begin with the raw amino-acid sequence, 305 residues long: Dihydroorotate dehydrogenase B (NAD(+)), catalytic subunit (305 aa).

FMN contacts are provided by residues Ser-21 and 45 to 46 (KA). Residues Lys-45 and 69–73 (NAIGL) contribute to the substrate site. FMN is bound by residues Asn-99 and Asn-127. Residue Asn-127 participates in substrate binding. The Nucleophile role is filled by Cys-130. Residues Lys-165 and Ile-191 each contribute to the FMN site. 192–193 (NT) contributes to the substrate binding site. FMN contacts are provided by residues Gly-217, 243-244 (GG), and 265-266 (GT).

This sequence belongs to the dihydroorotate dehydrogenase family. Type 1 subfamily. In terms of assembly, heterotetramer of 2 PyrK and 2 PyrD type B subunits. It depends on FMN as a cofactor.

The protein localises to the cytoplasm. It carries out the reaction (S)-dihydroorotate + NAD(+) = orotate + NADH + H(+). It participates in pyrimidine metabolism; UMP biosynthesis via de novo pathway; orotate from (S)-dihydroorotate (NAD(+) route): step 1/1. Its function is as follows. Catalyzes the conversion of dihydroorotate to orotate with NAD(+) as electron acceptor. The protein is Dihydroorotate dehydrogenase B (NAD(+)), catalytic subunit (pyrD) of Halalkalibacterium halodurans (strain ATCC BAA-125 / DSM 18197 / FERM 7344 / JCM 9153 / C-125) (Bacillus halodurans).